Consider the following 302-residue polypeptide: Ribosomal RNA small subunit methyltransferase A (302 aa).

The S-adenosyl-L-methionine site is built by His-15, Leu-17, Gly-42, Glu-64, Asp-89, and Asn-109. Residues 275 to 302 are disordered; it reads DAASADGHDHGDGSGQGESSPGGARDQI.

This sequence belongs to the class I-like SAM-binding methyltransferase superfamily. rRNA adenine N(6)-methyltransferase family. RsmA subfamily.

The protein resides in the cytoplasm. The catalysed reaction is adenosine(1518)/adenosine(1519) in 16S rRNA + 4 S-adenosyl-L-methionine = N(6)-dimethyladenosine(1518)/N(6)-dimethyladenosine(1519) in 16S rRNA + 4 S-adenosyl-L-homocysteine + 4 H(+). In terms of biological role, specifically dimethylates two adjacent adenosines (A1518 and A1519) in the loop of a conserved hairpin near the 3'-end of 16S rRNA in the 30S particle. May play a critical role in biogenesis of 30S subunits. The protein is Ribosomal RNA small subunit methyltransferase A of Parasynechococcus marenigrum (strain WH8102).